We begin with the raw amino-acid sequence, 389 residues long: Na(+)/H(+) antiporter NhaA (389 aa).

11 helical membrane-spanning segments follow: residues 14–34 (AGGILLLVAVALAMLMANSPL), 59–79 (LILWINDGLMAVFFLLIGLEV), 95–115 (SLPTFAAIGGMLVPAGVYLLF), 124–144 (AGWAIPAATDIAFALGIMALL), 154–174 (VFLLALAIIDDLGVIVIIALF), 177–197 (TDLSTISLVIASLAIAGLVGL), 213–233 (LILWVAVLKSGVHATLAGVII), 257–277 (PWSTFFILPVFAFANAGVYVG), 292–312 (IALGLMLGKPIGVMVFSYIAV), 328–348 (IAPVAAMCGIGFTMSMFIASL), and 363–383 (LGTLIGSIMAALVGYFWLSKV).

It belongs to the NhaA Na(+)/H(+) (TC 2.A.33) antiporter family.

It is found in the cell inner membrane. The catalysed reaction is Na(+)(in) + 2 H(+)(out) = Na(+)(out) + 2 H(+)(in). Functionally, na(+)/H(+) antiporter that extrudes sodium in exchange for external protons. In Shewanella baltica (strain OS195), this protein is Na(+)/H(+) antiporter NhaA.